The primary structure comprises 144 residues: MNLNELQPAAGSRKLRNRVGRGTSSGNGKTSGRGQKGQKARGKVRLGFEGGQMPLYRRIPKRGFTNISRKEFAVVNLEKLNTFADGTEVTPALLIENGIVKNQKSGIKVLAVGQLEKKLTVKAHKFSGAAKAAIEQAGGTTEVL.

Residues 1-44 (MNLNELQPAAGSRKLRNRVGRGTSSGNGKTSGRGQKGQKARGKV) form a disordered region. Over residues 23–35 (TSSGNGKTSGRGQ) the composition is skewed to gly residues.

The protein belongs to the universal ribosomal protein uL15 family. In terms of assembly, part of the 50S ribosomal subunit.

Binds to the 23S rRNA. This chain is Large ribosomal subunit protein uL15, found in Leuconostoc citreum (strain KM20).